A 1141-amino-acid polypeptide reads, in one-letter code: Eukaryotic translation initiation factor 3 subunit A (1141 aa).

In terms of domain architecture, PCI spans 319 to 501 (LQRMAAHVLL…NSIYFGTDLT (183 aa)). 2 stretches are compositionally biased toward basic and acidic residues: residues 588-623 (QNNAREEEEARRQEEESRKAKLAEQKRLEQEQEERE) and 829-899 (AAEE…RGGD). Disordered regions lie at residues 588 to 631 (QNNA…QNEI) and 829 to 1141 (AAEE…VKRR). Ser-908 bears the Phosphoserine mark. Basic and acidic residues-rich tracts occupy residues 920-976 (ERND…EPDT), 990-1051 (SRDD…EPQR), 1059-1087 (DAPRHADRENRRPAGERRDRDVRETRGDQ), and 1110-1131 (TREEKPAAKRDQAQEKENKAGD).

It belongs to the eIF-3 subunit A family. As to quaternary structure, component of the eukaryotic translation initiation factor 3 (eIF-3) complex. The eIF-3 complex interacts with pix.

It localises to the cytoplasm. Functionally, RNA-binding component of the eukaryotic translation initiation factor 3 (eIF-3) complex, which is involved in protein synthesis of a specialized repertoire of mRNAs and, together with other initiation factors, stimulates binding of mRNA and methionyl-tRNAi to the 40S ribosome. The eIF-3 complex specifically targets and initiates translation of a subset of mRNAs involved in cell proliferation. This is Eukaryotic translation initiation factor 3 subunit A from Drosophila sechellia (Fruit fly).